The following is a 431-amino-acid chain: Growth-regulating factor 9 (431 aa).

Residues 24 to 59 enclose the QLQ domain; sequence WMKAAQLMEFRMQALVYRYIEAGLRVPHHLVVPIWN. 2 WRC domains span residues 89–133 and 307–351; these read ETEP…LVES and DNEP…VDTT. 4 short sequence motifs (bipartite nuclear localization signal) span residues 94 to 104, 122 to 129, 312 to 322, and 340 to 345; these read RCRRTDGKKWR, RGRKRSRK, and RGMKKK.

Belongs to the GRF family. Interacts with GIF1. As to expression, detected in the shoot apical meristem (SAM) and in young leaf primordium.

It is found in the nucleus. In terms of biological role, transcription activator that plays a role in the regulation of cell expansion in leaf and cotyledons tissues. Component of a network formed by miR396, the GRFs and their interacting factors (GIFs) acting in the regulation of meristem function, at least partially through the control of cell proliferation. This chain is Growth-regulating factor 9 (GRF9), found in Arabidopsis thaliana (Mouse-ear cress).